The primary structure comprises 229 residues: Large ribosomal subunit protein uL1 (229 aa).

This sequence belongs to the universal ribosomal protein uL1 family. In terms of assembly, part of the 50S ribosomal subunit.

Functionally, binds directly to 23S rRNA. The L1 stalk is quite mobile in the ribosome, and is involved in E site tRNA release. Its function is as follows. Protein L1 is also a translational repressor protein, it controls the translation of the L11 operon by binding to its mRNA. The sequence is that of Large ribosomal subunit protein uL1 from Clostridium acetobutylicum (strain ATCC 824 / DSM 792 / JCM 1419 / IAM 19013 / LMG 5710 / NBRC 13948 / NRRL B-527 / VKM B-1787 / 2291 / W).